An 82-amino-acid chain; its full sequence is Costars family protein v1g158749 (82 aa).

The protein belongs to the costars family.

The chain is Costars family protein v1g158749 from Nematostella vectensis (Starlet sea anemone).